We begin with the raw amino-acid sequence, 776 residues long: Protein translocase subunit SecA 2 (776 aa).

Residues Q80, 98–102 (GEGKT), and D486 each bind ATP.

It belongs to the SecA family. In terms of assembly, monomer and homodimer. Part of the essential Sec protein translocation apparatus which comprises SecA, SecYEG and auxiliary proteins SecDF. Other proteins may also be involved.

It localises to the cell membrane. Its subcellular location is the cytoplasm. The catalysed reaction is ATP + H2O + cellular proteinSide 1 = ADP + phosphate + cellular proteinSide 2.. Its function is as follows. Part of the Sec protein translocase complex. Interacts with the SecYEG preprotein conducting channel. Has a central role in coupling the hydrolysis of ATP to the transfer of proteins into and across the cell membrane, serving as an ATP-driven molecular motor driving the stepwise translocation of polypeptide chains across the membrane. The sequence is that of Protein translocase subunit SecA 2 from Listeria monocytogenes serovar 1/2a (strain ATCC BAA-679 / EGD-e).